The chain runs to 504 residues: Putative lipase ATG15 (504 aa).

Residue methionine 1 is a topological domain, cytoplasmic. The chain crosses the membrane as a helical; Signal-anchor for type II membrane protein span at residues 2–22 (LGRQVTMLLKVIVAVAVLFVW). Residues 23-504 (HRSRDSSRGD…WLGICTDYGV (482 aa)) are Lumenal-facing. The N-linked (GlcNAc...) asparagine glycan is linked to asparagine 183. The Charge relay system role is filled by serine 313. Positions 458–484 (EESSSSIASSSQLTSSHSESETLTSTD) are disordered. The span at 461–483 (SSSIASSSQLTSSHSESETLTST) shows a compositional bias: low complexity.

Belongs to the AB hydrolase superfamily. Lipase family. Binds to both phosphatidylinositol (PI) and phosphatidylinositol 3,5-bisphosphate (PIP2).

It is found in the endosome. It localises to the multivesicular body membrane. The protein localises to the prevacuolar compartment membrane. The enzyme catalyses a triacylglycerol + H2O = a diacylglycerol + a fatty acid + H(+). Functionally, lipase which is essential for lysis of subvacuolar cytoplasm to vacuole targeted bodies and intravacuolar autophagic bodies. Involved in the lysis of intravacuolar multivesicular body (MVB) vesicles. The intravacuolar membrane disintegration by ATG15 is critical to life span extension. The sequence is that of Putative lipase ATG15 (ATG15) from Candida glabrata (strain ATCC 2001 / BCRC 20586 / JCM 3761 / NBRC 0622 / NRRL Y-65 / CBS 138) (Yeast).